A 1337-amino-acid chain; its full sequence is Partitioning defective 3 homolog (1337 aa).

Residue Ser-25 is modified to Phosphoserine. 2 disordered regions span residues 81–109 (EQDPHHGGDGTSASSTGTQSPEIFGSELG) and 143–263 (SSDP…LENM). Phosphothreonine is present on Thr-91. Positions 91 to 100 (TSASSTGTQS) are enriched in low complexity. 2 stretches are compositionally biased toward polar residues: residues 150–163 (GLSTSVSDNNFSSE) and 171–188 (TRWSTTAGFLKQNTTGSP). 2 positions are modified to phosphoserine: Ser-156 and Ser-174. The segment covering 190–203 (TCDRKKDENYRSLP) has biased composition (basic and acidic residues). A compositionally biased stretch (polar residues) spans 207–224 (SSWSNQFQRDNARSSLSA). Residues 271–359 (MVKLVQVPND…ARVIWFHVVP (89 aa)) form the PDZ 1 domain. The residue at position 383 (Ser-383) is a Phosphoserine. Residues 397–441 (NAPQALPRAPRLSQPPEQLDAHPRLPHSAHASTKPPTAPALAPPN) are disordered. PDZ domains are found at residues 461–546 (NIQL…LVFR) and 590–677 (EVPL…GMIQ). Phosphotyrosine is present on Tyr-489. Residues Ser-692, Ser-695, Ser-715, Ser-728, Ser-809, and Ser-827 each carry the phosphoserine modification. The segment at 712-936 (RRISHSLYSG…AAIDKSYDKP (225 aa)) is interaction with PRKCI and PRKCZ. N6-acetyllysine is present on Lys-834. Ser-837 bears the Phosphoserine mark. Lys-851 is subject to N6-acetyllysine. Phosphoserine is present on residues Ser-852 and Ser-873. Disordered regions lie at residues 866–888 (VDDQRAGSPNRDVGPSLGLKKSS), 932–1015 (SYDK…AKKG), 1028–1055 (KHRKDDKMEKMGRIKIQDSFTSEEDRVR), 1110–1271 (LNAR…LGGH), and 1284–1337 (LLRQ…PFYS). The residue at position 885 (Lys-885) is an N6-acetyllysine. Positions 935-1337 (KPMVDDDDEG…TPEKGRPFYS (403 aa)) are interaction with FRMD4A. Acidic residues predominate over residues 939–953 (DDDDEGMETLEEDTE). The residue at position 962 (Ser-962) is a Phosphoserine; by AURKA. Ser-971 and Ser-973 each carry phosphoserine. 2 stretches are compositionally biased toward basic and acidic residues: residues 981–1009 (DPEKRDKAEKKKDKAGKDKKKDREKEKDK) and 1030–1043 (RKDDKMEKMGRIKI). Ser-1046 carries the post-translational modification Phosphoserine. The stretch at 1050-1082 (EEDRVRMKEEQERIQAKTREFRERQARERDYAE) forms a coiled coil. A compositionally biased stretch (polar residues) spans 1138-1147 (PGDSNRSTPS). Over residues 1148 to 1175 (NHDRIQRLRQEFQQAKQDEDVEDRRRTY) the composition is skewed to basic and acidic residues. 3 coiled-coil regions span residues 1149-1172 (HDRIQRLRQEFQQAKQDEDVEDRR), 1199-1222 (VQVQRQRQEERESFQQAQRQYSSL), and 1278-1299 (MLETQELLRQEQRRKEQQLKKQ). Positions 1180–1203 (SWSSSRPASQSGRHSVSVEVQVQR) are enriched in low complexity. Polar residues predominate over residues 1219 to 1240 (YSSLPRQSRKNASSVSQDSWEQ). A compositionally biased stretch (basic and acidic residues) spans 1284 to 1296 (LLRQEQRRKEQQL). Positions 1318-1327 (SQVARLNRLQ) are enriched in polar residues. Residues 1328 to 1337 (TPEKGRPFYS) are compositionally biased toward basic and acidic residues. Position 1331 is an N6-acetyllysine (Lys-1331).

It belongs to the PAR3 family. Component of a complex whose core is composed of ARHGAP17, AMOT, PALS1, PATJ and PARD3/PAR3. Interacts (via PDZ 1 domain) with PARD6A, PARD6B and F11R/JAM1. Interacts with AURKA, AURKB and SIRT2. Interacts with PRKCI. Interacts with PRKCZ. Part of a complex with PARD6A or PARD6B, PRKCI or PRKCZ and CDC42 or RAC1. Interacts with LIMK2 and CDH5. Component of the Par polarity complex, composed of at least phosphorylated PRKCZ, PARD3 and TIAM1. Directly interacts with TIAM1 and TIAM2. Interacts with ECT2 and FBF1. Interacts (via PDZ 3 domain) with PTEN (via C-terminus). Interacts (via coiled-coil domain) with FRMD4A. Found in a complex with PARD3, CYTH1 and FRMD4A. Interacts with SAPCD2. Interacts with PRKCA. As to quaternary structure, interacts with PRKCZ. Acetylated. Deacetylated by SIRT2, thereby inhibiting Schwann cell peripheral myelination. In terms of processing, phosphorylation at Ser-827 by PRKCZ and PRKCI occurs at the most apical tip of epithelial cell-cell contacts during the initial phase of tight junction formation and may promote dissociation of the complex with PARD6. EGF-induced Tyr-1127 phosphorylation mediates dissociation from LIMK2. Phosphorylation by AURKA at Ser-962 is required for the normal establishment of neuronal polarity. Isoform 1 is predominantly expressed in lung, glandular stomach, prostate, ovary and uterus. Isoform 1 is also expressed in brain, with a high expression in the cortex, hippocampus and in the striatum. Isoform 2 is predominantly expressed in intestinal epithelial cells, kidney and prostate.

Its subcellular location is the cytoplasm. The protein localises to the endomembrane system. It is found in the cell junction. The protein resides in the tight junction. It localises to the adherens junction. Its subcellular location is the cell cortex. The protein localises to the cytoskeleton. It is found in the cell membrane. Its function is as follows. Adapter protein involved in asymmetrical cell division and cell polarization processes. Seems to play a central role in the formation of epithelial tight junctions. Association with PARD6B may prevent the interaction of PARD3 with F11R/JAM1, thereby preventing tight junction assembly. The PARD6-PARD3 complex links GTP-bound Rho small GTPases to atypical protein kinase C proteins. Required for establishment of neuronal polarity and normal axon formation in cultured hippocampal neurons. Involved in Schwann cell peripheral myelination. Targets the phosphatase PTEN to cell junctions. The protein is Partitioning defective 3 homolog (Pard3) of Rattus norvegicus (Rat).